Consider the following 386-residue polypeptide: ABC transporter permease protein NatB (386 aa).

Helical transmembrane passes span 19–39, 172–192, 226–246, 273–293, 300–320, and 353–373; these read TILL…FFYE, AIML…SGAM, WLAV…FLIL, ALII…ISIM, AQSY…FIFS, and ATIL…FLLA.

In terms of assembly, the complex is composed of NatA and NatB.

It is found in the cell membrane. It carries out the reaction Na(+)(in) + ATP + H2O = Na(+)(out) + ADP + phosphate + H(+). In terms of biological role, part of an ABC transporter that catalyzes ATP-dependent electrogenic sodium extrusion. This Bacillus subtilis (strain 168) protein is ABC transporter permease protein NatB.